Reading from the N-terminus, the 163-residue chain is MTEAAKPPTIPELEAQERRLTLPHFTYDDAWAFGNLLVELARRRCAPVAVDIRRGGQQLFHAALPGSTPDNDAWIDRKRRVVERYGSSSYLVGCRFRAKGTTFEESSRLDPDKYAAHGGAFPITVEGAGVVGTVVVSGLPQVEDHALVVEALEQFMTRPWSSS.

Belongs to the UPF0303 family.

The sequence is that of UPF0303 protein SAV_5210 from Streptomyces avermitilis (strain ATCC 31267 / DSM 46492 / JCM 5070 / NBRC 14893 / NCIMB 12804 / NRRL 8165 / MA-4680).